We begin with the raw amino-acid sequence, 437 residues long: Citrate synthase (437 aa).

Active-site residues include His-316 and Asp-372.

Belongs to the citrate synthase family. As to quaternary structure, homohexamer.

It catalyses the reaction oxaloacetate + acetyl-CoA + H2O = citrate + CoA + H(+). It participates in carbohydrate metabolism; tricarboxylic acid cycle; isocitrate from oxaloacetate: step 1/2. With respect to regulation, weakly inhibited by ATP (apparent Ki = 10 mm). The protein is Citrate synthase (gltA) of Corynebacterium glutamicum (strain ATCC 13032 / DSM 20300 / JCM 1318 / BCRC 11384 / CCUG 27702 / LMG 3730 / NBRC 12168 / NCIMB 10025 / NRRL B-2784 / 534).